The primary structure comprises 278 residues: Elongation factor Ts 1, mitochondrial (278 aa).

The protein belongs to the EF-Ts family.

It localises to the mitochondrion. Its function is as follows. Associates with the EF-Tu.GDP complex and induces the exchange of GDP to GTP. It remains bound to the aminoacyl-tRNA.EF-Tu.GTP complex up to the GTP hydrolysis stage on the ribosome. The polypeptide is Elongation factor Ts 1, mitochondrial (Trypanosoma cruzi (strain CL Brener)).